The primary structure comprises 224 residues: 7-cyano-7-deazaguanine synthase (224 aa).

10–20 (LSGGLDSATVV) is a binding site for ATP. Zn(2+) is bound by residues C189, C199, C202, and C205.

This sequence belongs to the QueC family. Zn(2+) serves as cofactor.

The enzyme catalyses 7-carboxy-7-deazaguanine + NH4(+) + ATP = 7-cyano-7-deazaguanine + ADP + phosphate + H2O + H(+). It functions in the pathway purine metabolism; 7-cyano-7-deazaguanine biosynthesis. Functionally, catalyzes the ATP-dependent conversion of 7-carboxy-7-deazaguanine (CDG) to 7-cyano-7-deazaguanine (preQ(0)). This chain is 7-cyano-7-deazaguanine synthase, found in Pseudomonas putida (strain W619).